The chain runs to 146 residues: Histone H2A.1 (146 aa).

The residue at position 1 (methionine 1) is an N-acetylmethionine. A disordered region spans residues 1–24; the sequence is MDATKTTKGAGGRKGGPRKKSVTK. The SPKK motif signature appears at 142 to 145; it reads SPKK.

The protein belongs to the histone H2A family. The nucleosome is a histone octamer containing two molecules each of H2A, H2B, H3 and H4 assembled in one H3-H4 heterotetramer and two H2A-H2B heterodimers. The octamer wraps approximately 147 bp of DNA. As to expression, high expression in meristematic tissues, in cells of the root pericycle and in shoot cortical cells undergoing endoduplication of their DNA.

It localises to the nucleus. It is found in the chromosome. Functionally, core component of nucleosome. Nucleosomes wrap and compact DNA into chromatin, limiting DNA accessibility to the cellular machineries which require DNA as a template. Histones thereby play a central role in transcription regulation, DNA repair, DNA replication and chromosomal stability. DNA accessibility is regulated via a complex set of post-translational modifications of histones, also called histone code, and nucleosome remodeling. This chain is Histone H2A.1, found in Solanum lycopersicum (Tomato).